Here is a 168-residue protein sequence, read N- to C-terminus: Large ribosomal subunit protein uL5 (168 aa).

It belongs to the universal ribosomal protein uL5 family. In terms of assembly, part of the 50S ribosomal subunit; contacts the 5S rRNA and probably tRNA. Forms a bridge to the 30S subunit in the 70S ribosome.

Functionally, this is one of the proteins that bind and probably mediate the attachment of the 5S RNA into the large ribosomal subunit, where it forms part of the central protuberance. In the 70S ribosome it contacts protein S13 of the 30S subunit (bridge B1b), connecting the 2 subunits; this bridge is implicated in subunit movement. May contact the P site tRNA; the 5S rRNA and some of its associated proteins might help stabilize positioning of ribosome-bound tRNAs. This chain is Large ribosomal subunit protein uL5, found in Methanospirillum hungatei JF-1 (strain ATCC 27890 / DSM 864 / NBRC 100397 / JF-1).